Consider the following 90-residue polypeptide: UPF0235 protein CPn_0497/CP_0257/CPj0497/CpB0517 (90 aa).

This sequence belongs to the UPF0235 family.

The sequence is that of UPF0235 protein CPn_0497/CP_0257/CPj0497/CpB0517 from Chlamydia pneumoniae (Chlamydophila pneumoniae).